The following is a 1368-amino-acid chain: DNA-directed RNA polymerase subunit beta' (1368 aa).

Positions 1 to 38 (MTSSSKPARKTSKSKSKASKAAEAPAAPSNELSREAPT) are disordered. Residues 7-18 (PARKTSKSKSKA) are compositionally biased toward basic residues. The span at 19–29 (SKAAEAPAAPS) shows a compositional bias: low complexity. Cysteine 250, cysteine 318, cysteine 325, and cysteine 328 together coordinate Zn(2+). The segment at 1340 to 1368 (AGEELAEEHVPDPGALEGLQEEGLLSQDS) is disordered. Low complexity predominate over residues 1353–1368 (GALEGLQEEGLLSQDS).

Belongs to the RNA polymerase beta' chain family. RpoC2 subfamily. In cyanobacteria the RNAP catalytic core is composed of 2 alpha, 1 beta, 1 beta', 1 gamma and 1 omega subunit. When a sigma factor is associated with the core the holoenzyme is formed, which can initiate transcription. The cofactor is Zn(2+).

The catalysed reaction is RNA(n) + a ribonucleoside 5'-triphosphate = RNA(n+1) + diphosphate. Its function is as follows. DNA-dependent RNA polymerase catalyzes the transcription of DNA into RNA using the four ribonucleoside triphosphates as substrates. The sequence is that of DNA-directed RNA polymerase subunit beta' from Synechococcus sp. (strain RCC307).